The primary structure comprises 612 residues: 1,8-cineole synthase, chloroplastic (612 aa).

The transit peptide at 1–52 (MALVSGAPLASRSCLNKSLISSTHELKPLRRTILPTLRWKSATPSINMCLTT) directs the protein to the chloroplast. Asp-363, Asp-367, and Asp-515 together coordinate Mg(2+). The short motif at 363 to 367 (DDIYD) is the DDXXD motif element.

Belongs to the terpene synthase family. Tpsd subfamily. Mg(2+) serves as cofactor. Mn(2+) is required as a cofactor.

Its subcellular location is the plastid. The protein localises to the chloroplast. It catalyses the reaction (2E)-geranyl diphosphate + H2O = 1,8-cineole + diphosphate. The protein operates within terpene metabolism; oleoresin biosynthesis. Functionally, terpene synthase (TPS) involved in the biosynthesis of monoterpene natural products included in conifer oleoresin secretions and volatile emissions; these compounds contribute to biotic and abiotic stress defense against herbivores and pathogens. Catalyzes the conversion of (2E)-geranyl diphosphate (GPP) to 1,8-cineole. This Picea engelmannii x Picea glauca (Hybrid white spruce) protein is 1,8-cineole synthase, chloroplastic.